Here is a 319-residue protein sequence, read N- to C-terminus: ATP-dependent 6-phosphofructokinase (319 aa).

Gly11 serves as a coordination point for ATP. 21–25 (RAVTR) serves as a coordination point for ADP. Residues 72 to 73 (RF) and 102 to 105 (GDGS) each bind ATP. Asp103 contacts Mg(2+). 125–127 (SID) provides a ligand contact to substrate. The active-site Proton acceptor is Asp127. Residue Arg154 coordinates ADP. Residues Arg162 and 169–171 (MGR) contribute to the substrate site. Residues 185-187 (GAD) and 213-215 (KKH) each bind ADP. Residues Glu222, Arg243, and 249–252 (HMQR) each bind substrate.

It belongs to the phosphofructokinase type A (PFKA) family. ATP-dependent PFK group I subfamily. Prokaryotic clade 'B1' sub-subfamily. As to quaternary structure, homotetramer. Mg(2+) serves as cofactor.

It is found in the cytoplasm. It catalyses the reaction beta-D-fructose 6-phosphate + ATP = beta-D-fructose 1,6-bisphosphate + ADP + H(+). Its pathway is carbohydrate degradation; glycolysis; D-glyceraldehyde 3-phosphate and glycerone phosphate from D-glucose: step 3/4. Its activity is regulated as follows. Allosterically activated by ADP and other diphosphonucleosides, and allosterically inhibited by phosphoenolpyruvate. Catalyzes the phosphorylation of D-fructose 6-phosphate to fructose 1,6-bisphosphate by ATP, the first committing step of glycolysis. The polypeptide is ATP-dependent 6-phosphofructokinase (Lactobacillus gasseri (strain ATCC 33323 / DSM 20243 / BCRC 14619 / CIP 102991 / JCM 1131 / KCTC 3163 / NCIMB 11718 / NCTC 13722 / AM63)).